Consider the following 199-residue polypeptide: Chaperone protein TorD (199 aa).

It belongs to the TorD/DmsD family. TorD subfamily.

The protein localises to the cytoplasm. Its function is as follows. Involved in the biogenesis of TorA. Acts on TorA before the insertion of the molybdenum cofactor and, as a result, probably favors a conformation of the apoenzyme that is competent for acquiring the cofactor. This Actinobacillus pleuropneumoniae serotype 3 (strain JL03) protein is Chaperone protein TorD.